The primary structure comprises 274 residues: Dermonecrotic toxin LarSicTox-alphaIV1 (274 aa).

His5 is a catalytic residue. 2 residues coordinate Mg(2+): Glu25 and Asp27. The active-site Nucleophile is His41. Intrachain disulfides connect Cys45–Cys51 and Cys47–Cys192. A Mg(2+)-binding site is contributed by Asp85.

Belongs to the arthropod phospholipase D family. Class II subfamily. Mg(2+) serves as cofactor. Expressed by the venom gland.

The protein resides in the secreted. The catalysed reaction is an N-(acyl)-sphingosylphosphocholine = an N-(acyl)-sphingosyl-1,3-cyclic phosphate + choline. It catalyses the reaction an N-(acyl)-sphingosylphosphoethanolamine = an N-(acyl)-sphingosyl-1,3-cyclic phosphate + ethanolamine. It carries out the reaction a 1-acyl-sn-glycero-3-phosphocholine = a 1-acyl-sn-glycero-2,3-cyclic phosphate + choline. The enzyme catalyses a 1-acyl-sn-glycero-3-phosphoethanolamine = a 1-acyl-sn-glycero-2,3-cyclic phosphate + ethanolamine. Its function is as follows. Dermonecrotic toxins cleave the phosphodiester linkage between the phosphate and headgroup of certain phospholipids (sphingolipid and lysolipid substrates), forming an alcohol (often choline) and a cyclic phosphate. This toxin acts on sphingomyelin (SM). It may also act on ceramide phosphoethanolamine (CPE), lysophosphatidylcholine (LPC) and lysophosphatidylethanolamine (LPE), but not on lysophosphatidylserine (LPS), and lysophosphatidylglycerol (LPG). It acts by transphosphatidylation, releasing exclusively cyclic phosphate products as second products. Induces dermonecrosis, hemolysis, increased vascular permeability, edema, inflammatory response, and platelet aggregation. This is Dermonecrotic toxin LarSicTox-alphaIV1 from Loxosceles arizonica (Arizona brown spider).